A 316-amino-acid polypeptide reads, in one-letter code: Biotin synthase (316 aa).

The Radical SAM core domain maps to asparagine 36–alanine 260. The [4Fe-4S] cluster site is built by cysteine 51, cysteine 55, and cysteine 58. Positions 95, 126, 186, and 258 each coordinate [2Fe-2S] cluster.

This sequence belongs to the radical SAM superfamily. Biotin synthase family. As to quaternary structure, homodimer. Requires [4Fe-4S] cluster as cofactor. [2Fe-2S] cluster serves as cofactor.

The enzyme catalyses (4R,5S)-dethiobiotin + (sulfur carrier)-SH + 2 reduced [2Fe-2S]-[ferredoxin] + 2 S-adenosyl-L-methionine = (sulfur carrier)-H + biotin + 2 5'-deoxyadenosine + 2 L-methionine + 2 oxidized [2Fe-2S]-[ferredoxin]. It functions in the pathway cofactor biosynthesis; biotin biosynthesis; biotin from 7,8-diaminononanoate: step 2/2. Catalyzes the conversion of dethiobiotin (DTB) to biotin by the insertion of a sulfur atom into dethiobiotin via a radical-based mechanism. In Lawsonia intracellularis (strain PHE/MN1-00), this protein is Biotin synthase.